A 308-amino-acid polypeptide reads, in one-letter code: tRNA pseudouridine synthase B (308 aa).

Aspartate 45 functions as the Nucleophile in the catalytic mechanism.

Belongs to the pseudouridine synthase TruB family. Type 1 subfamily.

It catalyses the reaction uridine(55) in tRNA = pseudouridine(55) in tRNA. Responsible for synthesis of pseudouridine from uracil-55 in the psi GC loop of transfer RNAs. The protein is tRNA pseudouridine synthase B of Gloeothece citriformis (strain PCC 7424) (Cyanothece sp. (strain PCC 7424)).